The primary structure comprises 150 residues: Centrin-B (150 aa).

EF-hand domains follow at residues 12 to 46, 80 to 114, and 115 to 150; these read DQISEIKESFDMFKSDNGKLDNDQIKYAFKALGCE, DSMSTLEQAFKLFVKDGSGITFKDLKKVAINIGEE, and CSDSDLYDMIEFADTDGDGVINKSEFISLMTTKKVL. Positions 128, 130, 132, and 139 each coordinate Ca(2+).

Belongs to the centrin family.

Its subcellular location is the cytoplasm. It localises to the cytoskeleton. The protein resides in the microtubule organizing center. The protein localises to the centrosome. Its function is as follows. Plays a fundamental role in microtubule-organizing center structure and function. In Dictyostelium discoideum (Social amoeba), this protein is Centrin-B (cenB).